The primary structure comprises 344 residues: MTQKLTITRPDDWHLHLRDGAALAAVLPDTARQFGRAIIMPNLKPPVTTVEQAQAYRARILAALPAGMSFEPLMTLYLTDNTPAEEIVAAKASGFVHGVKLYPAGATTNSDAGVTDIRRCAGALEAMQRVGLPLLVHGEVTDGDIDIFDREAVFIDRVMTPLRRDFPELKVVFEHITTRDAAQYVRDASGPVGATITAHHLLYNRNAIFTGGIRPHYYCLPVLKRETHREALVAAATSGSDRFFLGTDSAPHARGLKEHACGCAGCYTALHAMELYAEAFDAAGALDKLEAFASFNGPAFYGLPRNTGTLTLEREDWQLPAELPYGDATLVPLRAGETLRWKAR.

Residues H14 and H16 each contribute to the Zn(2+) site. Substrate-binding positions include 16-18 and N42; that span reads HLR. Zn(2+) contacts are provided by K100, H137, and H175. K100 is modified (N6-carboxylysine). Substrate is bound at residue H137. L220 lines the substrate pocket. D248 is a binding site for Zn(2+). D248 is a catalytic residue. 2 residues coordinate substrate: H252 and A264.

Belongs to the metallo-dependent hydrolases superfamily. DHOase family. Class II DHOase subfamily. In terms of assembly, homodimer. Zn(2+) serves as cofactor.

It carries out the reaction (S)-dihydroorotate + H2O = N-carbamoyl-L-aspartate + H(+). It participates in pyrimidine metabolism; UMP biosynthesis via de novo pathway; (S)-dihydroorotate from bicarbonate: step 3/3. Functionally, catalyzes the reversible cyclization of carbamoyl aspartate to dihydroorotate. In Cupriavidus pinatubonensis (strain JMP 134 / LMG 1197) (Cupriavidus necator (strain JMP 134)), this protein is Dihydroorotase.